Reading from the N-terminus, the 519-residue chain is Histidine ammonia-lyase (519 aa).

Positions 146–148 (ASG) form a cross-link, 5-imidazolinone (Ala-Gly). S147 is subject to 2,3-didehydroalanine (Ser).

This sequence belongs to the PAL/histidase family. In terms of processing, contains an active site 4-methylidene-imidazol-5-one (MIO), which is formed autocatalytically by cyclization and dehydration of residues Ala-Ser-Gly.

It localises to the cytoplasm. The enzyme catalyses L-histidine = trans-urocanate + NH4(+). The protein operates within amino-acid degradation; L-histidine degradation into L-glutamate; N-formimidoyl-L-glutamate from L-histidine: step 1/3. The chain is Histidine ammonia-lyase from Psychrobacter sp. (strain PRwf-1).